Here is a 110-residue protein sequence, read N- to C-terminus: UPF0122 protein spr1167 (110 aa).

This sequence belongs to the UPF0122 family.

In terms of biological role, might take part in the signal recognition particle (SRP) pathway. This is inferred from the conservation of its genetic proximity to ftsY/ffh. May be a regulatory protein. The protein is UPF0122 protein spr1167 of Streptococcus pneumoniae (strain ATCC BAA-255 / R6).